A 301-amino-acid polypeptide reads, in one-letter code: Nitric oxide synthase-interacting protein (301 aa).

Phosphoserine is present on serine 36. The segment at aspartate 55–leucine 75 is U-box-like. The short motif at lysine 78 to glutamate 101 is the Nuclear localization signal element. Residues proline 131–aspartate 154 are disordered.

The protein belongs to the NOSIP family. Interacts with NOS1 and NOS3. Interacts with PP2A holoenzyme, containing PPP2CA, PPP2CB, PPP2R1A and PPP2R2A subunits.

It is found in the cytoplasm. Its subcellular location is the nucleus. It carries out the reaction S-ubiquitinyl-[E2 ubiquitin-conjugating enzyme]-L-cysteine + [acceptor protein]-L-lysine = [E2 ubiquitin-conjugating enzyme]-L-cysteine + N(6)-ubiquitinyl-[acceptor protein]-L-lysine.. It participates in protein modification; protein ubiquitination. Functionally, E3 ubiquitin-protein ligase that is essential for proper development of the forebrain, the eye and the face. Catalyzes monoubiquitination of serine/threonine-protein phosphatase 2A (PP2A) catalytic subunit PPP2CA/PPP2CB. Negatively regulates nitric oxide production by inducing NOS1 and NOS3 translocation to actin cytoskeleton and inhibiting their enzymatic activity. This chain is Nitric oxide synthase-interacting protein (Nosip), found in Mus musculus (Mouse).